The following is a 758-amino-acid chain: 5-methyltetrahydropteroyltriglutamate--homocysteine methyltransferase (758 aa).

5-methyltetrahydropteroyltri-L-glutamate contacts are provided by residues 16-19 (RELK) and Lys112. Residues 433–435 (IGS) and Glu486 each bind L-homocysteine. L-methionine is bound by residues 433 to 435 (IGS) and Glu486. 5-methyltetrahydropteroyltri-L-glutamate contacts are provided by residues 517–518 (RC) and Trp563. Asp601 contributes to the L-homocysteine binding site. Asp601 lines the L-methionine pocket. Residue Glu607 coordinates 5-methyltetrahydropteroyltri-L-glutamate. 3 residues coordinate Zn(2+): His643, Cys645, and Glu667. His696 acts as the Proton donor in catalysis. Position 728 (Cys728) interacts with Zn(2+).

This sequence belongs to the vitamin-B12 independent methionine synthase family. Requires Zn(2+) as cofactor.

The enzyme catalyses 5-methyltetrahydropteroyltri-L-glutamate + L-homocysteine = tetrahydropteroyltri-L-glutamate + L-methionine. Its pathway is amino-acid biosynthesis; L-methionine biosynthesis via de novo pathway; L-methionine from L-homocysteine (MetE route): step 1/1. Its function is as follows. Catalyzes the transfer of a methyl group from 5-methyltetrahydrofolate to homocysteine resulting in methionine formation. This is 5-methyltetrahydropteroyltriglutamate--homocysteine methyltransferase from Neisseria gonorrhoeae (strain ATCC 700825 / FA 1090).